Here is a 736-residue protein sequence, read N- to C-terminus: Microtubule-associated protein mu-2 (736 aa).

Belongs to the orthoreovirus mu-2 protein family. Interacts with protein mu-NS; in viral inclusions. Interacts with polymerase lambda-3; this interaction stimulates the ATPase activity of mu-2. It depends on a divalent metal cation as a cofactor.

The protein localises to the virion. Its subcellular location is the host cytoplasm. The protein resides in the host cytoskeleton. In terms of biological role, minor inner capsid (core) component. Displays NTPase and RNA 5'-triphosphatase (RTPase) activities. ATP is the preferred substrate for hydrolysis. May function as a cofactor of polymerase lambda-3. Associates with microtubules and plays a role in the formation, structural organization and morphology of viral inclusions, where the assembly of cores and the replication of viral RNA occur. Together with mu-NS, recruits the other core proteins to these inclusions. The sequence is that of Microtubule-associated protein mu-2 (M1) from Mammalia (T2J).